The chain runs to 160 residues: Nucleotide-binding protein TERTU_3542 (160 aa).

The protein belongs to the YajQ family.

Functionally, nucleotide-binding protein. This chain is Nucleotide-binding protein TERTU_3542, found in Teredinibacter turnerae (strain ATCC 39867 / T7901).